Consider the following 104-residue polypeptide: Endogenous retrovirus group K member 21 Rec protein (104 aa).

The segment at 1–48 (MHPSEMQRKAPPRRRRHRNRAPLTHKMNKMVTSEQMKLPSTKKAEPPT) is disordered. The segment covering 10 to 20 (APPRRRRHRNR) has biased composition (basic residues). A Nuclear localization signal motif is present at residues 13–20 (RRRRHRNR). Residues 49 to 58 (WAQLKKLTQL) carry the Nuclear export signal motif.

Forms homodimers, homotrimers, and homotetramers via a C-terminal domain. Associates with XPO1 and with ZNF145.

It is found in the cytoplasm. It localises to the nucleus. Its subcellular location is the nucleolus. Functionally, retroviral replication requires the nuclear export and translation of unspliced, singly-spliced and multiply-spliced derivatives of the initial genomic transcript. Rec interacts with a highly structured RNA element (RcRE) present in the viral 3'LTR and recruits the cellular nuclear export machinery. This permits export to the cytoplasm of unspliced genomic or incompletely spliced subgenomic viral transcripts. This chain is Endogenous retrovirus group K member 21 Rec protein (ERVK-21), found in Homo sapiens (Human).